Here is a 139-residue protein sequence, read N- to C-terminus: Nucleoside diphosphate kinase (139 aa).

Residues K12, F60, R88, T94, R105, and N115 each contribute to the ATP site. H118 functions as the Pros-phosphohistidine intermediate in the catalytic mechanism.

This sequence belongs to the NDK family. In terms of assembly, homotetramer. Mg(2+) is required as a cofactor.

The protein localises to the cytoplasm. It carries out the reaction a 2'-deoxyribonucleoside 5'-diphosphate + ATP = a 2'-deoxyribonucleoside 5'-triphosphate + ADP. The catalysed reaction is a ribonucleoside 5'-diphosphate + ATP = a ribonucleoside 5'-triphosphate + ADP. Major role in the synthesis of nucleoside triphosphates other than ATP. The ATP gamma phosphate is transferred to the NDP beta phosphate via a ping-pong mechanism, using a phosphorylated active-site intermediate. This is Nucleoside diphosphate kinase from Caldanaerobacter subterraneus subsp. tengcongensis (strain DSM 15242 / JCM 11007 / NBRC 100824 / MB4) (Thermoanaerobacter tengcongensis).